A 901-amino-acid chain; its full sequence is Protein translocase subunit SecA (901 aa).

ATP-binding positions include glutamine 87, 105-109, and aspartate 512; that span reads GEGKT. The disordered stretch occupies residues 858-891; the sequence is SHQDDDTAAAAALAAQTGDRKVGRNDPCPCGSGK. Cysteine 885, cysteine 887, cysteine 896, and histidine 897 together coordinate Zn(2+).

This sequence belongs to the SecA family. In terms of assembly, monomer and homodimer. Part of the essential Sec protein translocation apparatus which comprises SecA, SecYEG and auxiliary proteins SecDF-YajC and YidC. Zn(2+) is required as a cofactor.

The protein resides in the cell inner membrane. It localises to the cytoplasm. It catalyses the reaction ATP + H2O + cellular proteinSide 1 = ADP + phosphate + cellular proteinSide 2.. Functionally, part of the Sec protein translocase complex. Interacts with the SecYEG preprotein conducting channel. Has a central role in coupling the hydrolysis of ATP to the transfer of proteins into and across the cell membrane, serving both as a receptor for the preprotein-SecB complex and as an ATP-driven molecular motor driving the stepwise translocation of polypeptide chains across the membrane. In Escherichia fergusonii (strain ATCC 35469 / DSM 13698 / CCUG 18766 / IAM 14443 / JCM 21226 / LMG 7866 / NBRC 102419 / NCTC 12128 / CDC 0568-73), this protein is Protein translocase subunit SecA.